The sequence spans 41 residues: Large ribosomal subunit protein bL36 (41 aa).

The protein belongs to the bacterial ribosomal protein bL36 family.

This is Large ribosomal subunit protein bL36 from Bartonella henselae (strain ATCC 49882 / DSM 28221 / CCUG 30454 / Houston 1) (Rochalimaea henselae).